The chain runs to 264 residues: Ribosomal protein L11 methyltransferase (264 aa).

Thr116, Gly137, Asp159, and Asn200 together coordinate S-adenosyl-L-methionine.

The protein belongs to the methyltransferase superfamily. PrmA family.

The protein resides in the cytoplasm. It catalyses the reaction L-lysyl-[protein] + 3 S-adenosyl-L-methionine = N(6),N(6),N(6)-trimethyl-L-lysyl-[protein] + 3 S-adenosyl-L-homocysteine + 3 H(+). In terms of biological role, methylates ribosomal protein L11. In Thermotoga petrophila (strain ATCC BAA-488 / DSM 13995 / JCM 10881 / RKU-1), this protein is Ribosomal protein L11 methyltransferase.